The following is a 449-amino-acid chain: Methionine aminopeptidase 2 (449 aa).

A disordered region spans residues 1–91 (MAAQAAPELA…PRIPLTTLFP (91 aa)). Residues 34-50 (EEAENEGDSEDDRDDEQ) show a composition bias toward acidic residues. The segment covering 61–75 (KKKKKKRPKKKKKTA) has biased composition (basic residues). Substrate is bound at residue histidine 199. Positions 219, 230, and 299 each coordinate a divalent metal cation. Substrate is bound at residue histidine 307. The a divalent metal cation site is built by glutamate 335 and glutamate 430.

It belongs to the peptidase M24A family. Methionine aminopeptidase eukaryotic type 2 subfamily. Co(2+) is required as a cofactor. Zn(2+) serves as cofactor. The cofactor is Mn(2+). It depends on Fe(2+) as a cofactor.

The protein resides in the cytoplasm. The catalysed reaction is Release of N-terminal amino acids, preferentially methionine, from peptides and arylamides.. In terms of biological role, cotranslationally removes the N-terminal methionine from nascent proteins. The N-terminal methionine is often cleaved when the second residue in the primary sequence is small and uncharged (Met-Ala-, Cys, Gly, Pro, Ser, Thr, or Val). This chain is Methionine aminopeptidase 2, found in Trichophyton verrucosum (strain HKI 0517).